A 101-amino-acid chain; its full sequence is Small ribosomal subunit protein bS6 (101 aa).

Belongs to the bacterial ribosomal protein bS6 family.

Its function is as follows. Binds together with bS18 to 16S ribosomal RNA. In Nitratidesulfovibrio vulgaris (strain ATCC 29579 / DSM 644 / CCUG 34227 / NCIMB 8303 / VKM B-1760 / Hildenborough) (Desulfovibrio vulgaris), this protein is Small ribosomal subunit protein bS6.